The following is a 337-amino-acid chain: Phenylalanine--tRNA ligase alpha subunit (337 aa).

A Mg(2+)-binding site is contributed by E252.

The protein belongs to the class-II aminoacyl-tRNA synthetase family. Phe-tRNA synthetase alpha subunit type 1 subfamily. Tetramer of two alpha and two beta subunits. It depends on Mg(2+) as a cofactor.

The protein localises to the cytoplasm. The catalysed reaction is tRNA(Phe) + L-phenylalanine + ATP = L-phenylalanyl-tRNA(Phe) + AMP + diphosphate + H(+). In Francisella tularensis subsp. novicida (strain U112), this protein is Phenylalanine--tRNA ligase alpha subunit.